Consider the following 410-residue polypeptide: MSVQTSPSKQVTSGIQNLNMDSPAKKLDFGATDKENKPFDEDLAKLEAEIDAEHNANKKAAEAKKMAPTLKPEEANEPLLTENPQRFVLFPIKYHEIWQMYKKAEASFWTAEEIDLSKDLHDWNNRLNDDEKFFISHILAFFAASDGIVNENLVERFSGEVQIPEARCFYGFQIMMENIHSETYSLLIDTYIKEPSQRTYLFNAIDTIPCIRKKADWALRWITDKSSTFAQRLVAFAAVEGIFFSGAFASIFWLKKRGLMPGLTFSNELISRDEGLHTDFACLLFSHLNNRPSKQLIQEIIVDAVRIEQEFLTEALPCALLGMNADLMKQYIEFVADRLLVALGNEKIYRSTNPFDFMENISLGGKTNFFEKRVGDYQKAGVMNSTKKADADAEVAKNENGGDFTFDEDF.

The span at 1 to 20 (MSVQTSPSKQVTSGIQNLNM) shows a compositional bias: polar residues. 2 disordered regions span residues 1–43 (MSVQ…DEDL) and 55–78 (NANK…ANEP). Basic and acidic residues-rich tracts occupy residues 23 to 43 (PAKK…DEDL) and 55 to 65 (NANKKAAEAKK). Positions 146, 177, and 180 each coordinate Fe cation. Residue Y184 is part of the active site. Fe cation contacts are provided by E240, E274, and H277.

Belongs to the ribonucleoside diphosphate reductase small chain family. In terms of assembly, heterodimer of a large and a small subunit. Requires Fe cation as cofactor.

It carries out the reaction a 2'-deoxyribonucleoside 5'-diphosphate + [thioredoxin]-disulfide + H2O = a ribonucleoside 5'-diphosphate + [thioredoxin]-dithiol. Functionally, provides the precursors necessary for DNA synthesis. Catalyzes the biosynthesis of deoxyribonucleotides from the corresponding ribonucleotides. The protein is Ribonucleoside-diphosphate reductase small chain (rnr-2) of Neurospora crassa (strain ATCC 24698 / 74-OR23-1A / CBS 708.71 / DSM 1257 / FGSC 987).